The sequence spans 348 residues: Holliday junction branch migration complex subunit RuvB (348 aa).

A compositionally biased stretch (low complexity) spans 1-10 (MAIVSSSSGR). The interval 1–37 (MAIVSSSSGRKPPRRPEALMDPQQAPEEVVSRPEDKL) is disordered. A large ATPase domain (RuvB-L) region spans residues 13–198 (PRRPEALMDP…FGLIQRLEFY (186 aa)). Residues Leu-37, Arg-38, Gly-79, Lys-82, Thr-83, Thr-84, Arg-188, Tyr-198, and Arg-235 each contribute to the ATP site. Thr-83 contributes to the Mg(2+) binding site. The segment at 199-271 (GQGDLEAIVE…LVGEALSLHR (73 aa)) is small ATPAse domain (RuvB-S). A head domain (RuvB-H) region spans residues 274-348 (HRGLDASDRR…AARSHLAEAA (75 aa)). 2 residues coordinate DNA: Arg-329 and Arg-334.

This sequence belongs to the RuvB family. In terms of assembly, homohexamer. Forms an RuvA(8)-RuvB(12)-Holliday junction (HJ) complex. HJ DNA is sandwiched between 2 RuvA tetramers; dsDNA enters through RuvA and exits via RuvB. An RuvB hexamer assembles on each DNA strand where it exits the tetramer. Each RuvB hexamer is contacted by two RuvA subunits (via domain III) on 2 adjacent RuvB subunits; this complex drives branch migration. In the full resolvosome a probable DNA-RuvA(4)-RuvB(12)-RuvC(2) complex forms which resolves the HJ.

The protein resides in the cytoplasm. The catalysed reaction is ATP + H2O = ADP + phosphate + H(+). Functionally, the RuvA-RuvB-RuvC complex processes Holliday junction (HJ) DNA during genetic recombination and DNA repair, while the RuvA-RuvB complex plays an important role in the rescue of blocked DNA replication forks via replication fork reversal (RFR). RuvA specifically binds to HJ cruciform DNA, conferring on it an open structure. The RuvB hexamer acts as an ATP-dependent pump, pulling dsDNA into and through the RuvAB complex. RuvB forms 2 homohexamers on either side of HJ DNA bound by 1 or 2 RuvA tetramers; 4 subunits per hexamer contact DNA at a time. Coordinated motions by a converter formed by DNA-disengaged RuvB subunits stimulates ATP hydrolysis and nucleotide exchange. Immobilization of the converter enables RuvB to convert the ATP-contained energy into a lever motion, pulling 2 nucleotides of DNA out of the RuvA tetramer per ATP hydrolyzed, thus driving DNA branch migration. The RuvB motors rotate together with the DNA substrate, which together with the progressing nucleotide cycle form the mechanistic basis for DNA recombination by continuous HJ branch migration. Branch migration allows RuvC to scan DNA until it finds its consensus sequence, where it cleaves and resolves cruciform DNA. In Synechococcus sp. (strain CC9605), this protein is Holliday junction branch migration complex subunit RuvB.